Consider the following 630-residue polypeptide: Chaperone protein HtpG (630 aa).

Residues 1–339 (MSHTETHAFQ…SNDLPLNVSR (339 aa)) are a; substrate-binding. A b region spans residues 340-556 (EILQSNRVVD…EGDISAHMAR (217 aa)). The interval 557-630 (MMEQMGQAMP…RMNALLSEVI (74 aa)) is c.

Belongs to the heat shock protein 90 family. In terms of assembly, homodimer.

The protein localises to the cytoplasm. Its function is as follows. Molecular chaperone. Has ATPase activity. This Hydrogenovibrio crunogenus (strain DSM 25203 / XCL-2) (Thiomicrospira crunogena) protein is Chaperone protein HtpG.